A 432-amino-acid chain; its full sequence is Adenylosuccinate synthetase (432 aa).

GTP contacts are provided by residues 13–19 (GDEGKGK) and 41–43 (GHT). Asp14 serves as the catalytic Proton acceptor. Positions 14 and 41 each coordinate Mg(2+). Residues 14 to 17 (DEGK), 39 to 42 (NAGH), Thr130, Arg144, Gln225, Thr240, and Arg304 each bind IMP. The active-site Proton donor is His42. Position 300–306 (300–306 (ATTGRRR)) interacts with substrate. GTP-binding positions include Arg306, 332–334 (KLD), and 415–417 (STG).

It belongs to the adenylosuccinate synthetase family. In terms of assembly, homodimer. Mg(2+) serves as cofactor.

The protein resides in the cytoplasm. The enzyme catalyses IMP + L-aspartate + GTP = N(6)-(1,2-dicarboxyethyl)-AMP + GDP + phosphate + 2 H(+). The protein operates within purine metabolism; AMP biosynthesis via de novo pathway; AMP from IMP: step 1/2. Functionally, plays an important role in the de novo pathway of purine nucleotide biosynthesis. Catalyzes the first committed step in the biosynthesis of AMP from IMP. This is Adenylosuccinate synthetase from Edwardsiella ictaluri (strain 93-146).